A 489-amino-acid chain; its full sequence is Lysine--tRNA ligase (489 aa).

The Mg(2+) site is built by Glu399 and Glu406.

This sequence belongs to the class-II aminoacyl-tRNA synthetase family. Homodimer. The cofactor is Mg(2+).

It localises to the cytoplasm. It carries out the reaction tRNA(Lys) + L-lysine + ATP = L-lysyl-tRNA(Lys) + AMP + diphosphate. In Roseiflexus castenholzii (strain DSM 13941 / HLO8), this protein is Lysine--tRNA ligase.